Reading from the N-terminus, the 168-residue chain is Transcriptional repressor NrdR (168 aa).

The tract at residues 1–21 is disordered; it reads MQCPACRHTDSRVLESRSSES. Residues 3–34 fold into a zinc finger; that stretch reads CPACRHTDSRVLESRSSESGRSVRRRRECLSC. Residues 7–20 are compositionally biased toward basic and acidic residues; sequence RHTDSRVLESRSSE. The region spanning 49 to 139 is the ATP-cone domain; that stretch reads ISVIKRNGDR…VYRQFRGVRD (91 aa).

The protein belongs to the NrdR family. Zn(2+) serves as cofactor.

Functionally, negatively regulates transcription of bacterial ribonucleotide reductase nrd genes and operons by binding to NrdR-boxes. The protein is Transcriptional repressor NrdR of Synechococcus elongatus (strain ATCC 33912 / PCC 7942 / FACHB-805) (Anacystis nidulans R2).